A 172-amino-acid chain; its full sequence is Crossover junction endodeoxyribonuclease RuvC (172 aa).

Catalysis depends on residues Asp-12, Glu-71, and Asp-143. Residues Asp-12, Glu-71, and Asp-143 each contribute to the Mg(2+) site.

The protein belongs to the RuvC family. Homodimer which binds Holliday junction (HJ) DNA. The HJ becomes 2-fold symmetrical on binding to RuvC with unstacked arms; it has a different conformation from HJ DNA in complex with RuvA. In the full resolvosome a probable DNA-RuvA(4)-RuvB(12)-RuvC(2) complex forms which resolves the HJ. Requires Mg(2+) as cofactor.

Its subcellular location is the cytoplasm. It catalyses the reaction Endonucleolytic cleavage at a junction such as a reciprocal single-stranded crossover between two homologous DNA duplexes (Holliday junction).. In terms of biological role, the RuvA-RuvB-RuvC complex processes Holliday junction (HJ) DNA during genetic recombination and DNA repair. Endonuclease that resolves HJ intermediates. Cleaves cruciform DNA by making single-stranded nicks across the HJ at symmetrical positions within the homologous arms, yielding a 5'-phosphate and a 3'-hydroxyl group; requires a central core of homology in the junction. The consensus cleavage sequence is 5'-(A/T)TT(C/G)-3'. Cleavage occurs on the 3'-side of the TT dinucleotide at the point of strand exchange. HJ branch migration catalyzed by RuvA-RuvB allows RuvC to scan DNA until it finds its consensus sequence, where it cleaves and resolves the cruciform DNA. The polypeptide is Crossover junction endodeoxyribonuclease RuvC (Coxiella burnetii (strain CbuK_Q154) (Coxiella burnetii (strain Q154))).